A 153-amino-acid polypeptide reads, in one-letter code: Aspartate carbamoyltransferase regulatory chain (153 aa).

Zn(2+) is bound by residues cysteine 109, cysteine 114, cysteine 138, and cysteine 141.

Belongs to the PyrI family. As to quaternary structure, contains catalytic and regulatory chains. Zn(2+) serves as cofactor.

Involved in allosteric regulation of aspartate carbamoyltransferase. This chain is Aspartate carbamoyltransferase regulatory chain, found in Nitrosopumilus maritimus (strain SCM1).